A 211-amino-acid chain; its full sequence is N-(5'-phosphoribosyl)anthranilate isomerase (211 aa).

Belongs to the TrpF family.

The enzyme catalyses N-(5-phospho-beta-D-ribosyl)anthranilate = 1-(2-carboxyphenylamino)-1-deoxy-D-ribulose 5-phosphate. It functions in the pathway amino-acid biosynthesis; L-tryptophan biosynthesis; L-tryptophan from chorismate: step 3/5. The protein is N-(5'-phosphoribosyl)anthranilate isomerase of Hyphomonas neptunium (strain ATCC 15444).